We begin with the raw amino-acid sequence, 477 residues long: Glutamate--tRNA ligase (477 aa).

The 'HIGH' region motif lies at 18 to 28 (PSPTGFIHLGN). A compositionally biased stretch (basic and acidic residues) spans 128-138 (PRYDGSWRPEP). Positions 128–151 (PRYDGSWRPEPGKTLPPVPAGMSP) are disordered. Residues 250 to 254 (KLSKR) carry the 'KMSKS' region motif. Position 253 (Lys-253) interacts with ATP.

The protein belongs to the class-I aminoacyl-tRNA synthetase family. Glutamate--tRNA ligase type 1 subfamily. Monomer.

The protein resides in the cytoplasm. It catalyses the reaction tRNA(Glu) + L-glutamate + ATP = L-glutamyl-tRNA(Glu) + AMP + diphosphate. Catalyzes the attachment of glutamate to tRNA(Glu) in a two-step reaction: glutamate is first activated by ATP to form Glu-AMP and then transferred to the acceptor end of tRNA(Glu). The chain is Glutamate--tRNA ligase from Verminephrobacter eiseniae (strain EF01-2).